Here is a 489-residue protein sequence, read N- to C-terminus: Valine--tRNA ligase (489 aa).

The 'KMSKS' region motif lies at 482–486 (KMSKS). Lysine 485 provides a ligand contact to ATP.

This sequence belongs to the class-I aminoacyl-tRNA synthetase family.

It catalyses the reaction tRNA(Val) + L-valine + ATP = L-valyl-tRNA(Val) + AMP + diphosphate. The protein is Valine--tRNA ligase (VALS) of Trichomonas vaginalis.